The primary structure comprises 249 residues: Acetylglutamate kinase (249 aa).

Substrate-binding positions include 42 to 43, R64, and N155; that span reads GG.

Belongs to the acetylglutamate kinase family. ArgB subfamily.

Its subcellular location is the cytoplasm. The catalysed reaction is N-acetyl-L-glutamate + ATP = N-acetyl-L-glutamyl 5-phosphate + ADP. It participates in amino-acid biosynthesis; L-arginine biosynthesis; N(2)-acetyl-L-ornithine from L-glutamate: step 2/4. In terms of biological role, catalyzes the ATP-dependent phosphorylation of N-acetyl-L-glutamate. The protein is Acetylglutamate kinase of Endomicrobium trichonymphae.